The primary structure comprises 83 residues: U25-theraphotoxin-Cg1a (83 aa).

A signal peptide spans 1–23 (MRFHTLLFLSFLLLVSCALICTA). Residues 24–48 (QHPGLKKSGMFHENVGKGQHIEKKR) constitute a propeptide that is removed on maturation. 3 cysteine pairs are disulfide-bonded: C50/C66, C57/C71, and C65/C81.

This sequence belongs to the neurotoxin 07 (Beta/delta-agtx) family. 03 (aga-4) subfamily. JZTX sub-subfamily. In terms of tissue distribution, expressed by the venom gland.

The protein localises to the secreted. Its function is as follows. Inhibits TTX-sensitive sodium currents in rat dorsal root ganglion (DRG) neurons. The polypeptide is U25-theraphotoxin-Cg1a (Chilobrachys guangxiensis (Chinese earth tiger tarantula)).